Here is a 208-residue protein sequence, read N- to C-terminus: Holliday junction resolvase RecU (208 aa).

Positions 87, 89, 102, and 121 each coordinate Mg(2+).

This sequence belongs to the RecU family. Mg(2+) serves as cofactor.

It is found in the cytoplasm. The catalysed reaction is Endonucleolytic cleavage at a junction such as a reciprocal single-stranded crossover between two homologous DNA duplexes (Holliday junction).. Functionally, endonuclease that resolves Holliday junction intermediates in genetic recombination. Cleaves mobile four-strand junctions by introducing symmetrical nicks in paired strands. Promotes annealing of linear ssDNA with homologous dsDNA. Required for DNA repair, homologous recombination and chromosome segregation. In Staphylococcus aureus (strain Mu3 / ATCC 700698), this protein is Holliday junction resolvase RecU.